The chain runs to 448 residues: MSRLTCLAFPGRSIPMAVLERLSVAARELPASVRALRAVPGVDQVLVLSTCERTEVYAWWTDEADPAALLRALAGQRGLGPEPLLEHAVGLTGREAVQHLLRVTAGLDSFVRGESDIVGQVRAAVQAARAEGAVGLEVQRLVDAAVNTSRRVHRSTGAGLAAGSVASTAVAAVAGLLPDGLAGRDLLVVGTGQVAVSVVAAAREAGARLTVCGRDPERAAAIAPAGARVLGLDDLPGALLDADAVVFGTSSPERLLRAGDLGPGLSEHRSGRELVVVDLCVPRNVDPDVRGVPGVRLLDLTDLRGAAVPGRRPSAPAPAALELAEQIVAQEVDRFLHWWVDRAAAEPVRRLRADVEACVREEVARATRGLSPDLEPLVAEGIRRAVQHLAHGPTRRLLDAAAAGEDEVVALLAGLFAPSAEEDQAVPAYSPQPIGNTSNAAASATPRR.

Substrate-binding positions include 50–53, Ser-109, 114–116, and Gln-120; these read TCER and ESD. The active-site Nucleophile is the Cys-51. Residue 190–195 participates in NADP(+) binding; sequence GTGQVA. The tract at residues 423 to 448 is disordered; it reads DQAVPAYSPQPIGNTSNAAASATPRR. The span at 433–442 shows a compositional bias: polar residues; it reads PIGNTSNAAA.

Belongs to the glutamyl-tRNA reductase family. Homodimer.

The enzyme catalyses (S)-4-amino-5-oxopentanoate + tRNA(Glu) + NADP(+) = L-glutamyl-tRNA(Glu) + NADPH + H(+). Its pathway is porphyrin-containing compound metabolism; protoporphyrin-IX biosynthesis; 5-aminolevulinate from L-glutamyl-tRNA(Glu): step 1/2. In terms of biological role, catalyzes the NADPH-dependent reduction of glutamyl-tRNA(Glu) to glutamate 1-semialdehyde (GSA). This is Glutamyl-tRNA reductase 2 from Nocardioides sp. (strain ATCC BAA-499 / JS614).